A 328-amino-acid chain; its full sequence is DNA-directed RNA polymerase subunit alpha (328 aa).

Residues 1–230 (MSNHGLQMPE…DHVSFFIQLE (230 aa)) are alpha N-terminal domain (alpha-NTD). Residues 248-328 (RIRELLAQPV…EEYLEEKKAS (81 aa)) are alpha C-terminal domain (alpha-CTD).

This sequence belongs to the RNA polymerase alpha chain family. Homodimer. The RNAP catalytic core consists of 2 alpha, 1 beta, 1 beta' and 1 omega subunit. When a sigma factor is associated with the core the holoenzyme is formed, which can initiate transcription.

It catalyses the reaction RNA(n) + a ribonucleoside 5'-triphosphate = RNA(n+1) + diphosphate. In terms of biological role, DNA-dependent RNA polymerase catalyzes the transcription of DNA into RNA using the four ribonucleoside triphosphates as substrates. The sequence is that of DNA-directed RNA polymerase subunit alpha from Salinibacter ruber (strain DSM 13855 / M31).